Consider the following 84-residue polypeptide: Toxin Ts4 (84 aa).

A signal peptide spans 1–19; it reads MKRMILFISCLLLIDIVVG. In terms of domain architecture, LCN-type CS-alpha/beta spans 21–82; it reads REGYPADSKG…IWTSETNKCG (62 aa). Disulfide bonds link Cys31–Cys81, Cys35–Cys57, Cys43–Cys62, and Cys47–Cys64. A Cysteine amide modification is found at Cys81. Positions 82–84 are excised as a propeptide; that stretch reads GKK.

The protein belongs to the long (4 C-C) scorpion toxin superfamily. Sodium channel inhibitor family. Alpha subfamily. Expressed by the venom gland.

It localises to the secreted. In terms of biological role, not toxic. Induces an immune response similar to that induced by whole venom. Induces a dose dependent release of the neurotransmitters glutamic acid and gamma aminobutyric acid from rat brain synaptosomes. Thus, polyclonal antibodies raised against this protein can neutralize the effects of the venom. The chain is Toxin Ts4 from Tityus serrulatus (Brazilian scorpion).